The chain runs to 495 residues: Glycerol kinase (495 aa).

Thr11 contributes to the ADP binding site. Residues Thr11, Thr12, and Ser13 each contribute to the ATP site. Position 11 (Thr11) interacts with sn-glycerol 3-phosphate. Arg15 contacts ADP. Sn-glycerol 3-phosphate-binding residues include Arg81, Glu82, Tyr133, and Asp242. 5 residues coordinate glycerol: Arg81, Glu82, Tyr133, Asp242, and Gln243. ADP contacts are provided by Thr264 and Gly307. ATP-binding residues include Thr264, Gly307, Gln311, and Gly410. Gly410 contributes to the ADP binding site.

The protein belongs to the FGGY kinase family.

The catalysed reaction is glycerol + ATP = sn-glycerol 3-phosphate + ADP + H(+). It participates in polyol metabolism; glycerol degradation via glycerol kinase pathway; sn-glycerol 3-phosphate from glycerol: step 1/1. Inhibited by fructose 1,6-bisphosphate (FBP). Key enzyme in the regulation of glycerol uptake and metabolism. Catalyzes the phosphorylation of glycerol to yield sn-glycerol 3-phosphate. This Roseobacter denitrificans (strain ATCC 33942 / OCh 114) (Erythrobacter sp. (strain OCh 114)) protein is Glycerol kinase.